A 4454-amino-acid chain; its full sequence is E3 ubiquitin-protein ligase HUWE1 (4454 aa).

The tract at residues 521 to 575 (RASSSNSSTSISGPGPGPGPGPGPGPGPGPGPGPGPGLGPSLGPGPGPGPRPGVQ) is disordered. Residues 523–533 (SSSNSSTSISG) show a composition bias toward low complexity. Residues 535 to 571 (GPGPGPGPGPGPGPGPGPGPGPGLGPSLGPGPGPGPR) are compositionally biased toward pro residues. Residues Ser-724 and Ser-725 each carry the phosphoserine modification. Disordered stretches follow at residues 781 to 834 (QKAD…VVGT), 1054 to 1077 (DEKAGTTQGGKRSDGEQDGTAGSM), and 1094 to 1114 (TLAPMETDEPSSSDSKGKSKI). The span at 801-811 (ASSEDEEEEEV) shows a compositional bias: acidic residues. Positions 813–832 (AMQSFNSAQQNETEPNQQVV) are enriched in polar residues. Ser-816 is subject to Phosphoserine. Phosphoserine is present on Ser-1160. Residues 1367–1378 (LSKEKEGSRGEE) show a composition bias toward basic and acidic residues. The interval 1367 to 1396 (LSKEKEGSRGEEEAGQEEGGSRREPQVNQQ) is disordered. A UBA domain is found at 1392-1431 (QVNQQQLQQLMDMGFTREHAMEALLNTSTMEQATEYLLTH). 4 positions are modified to phosphoserine: Ser-1444, Ser-1446, Ser-1458, and Ser-1471. Positions 1446–1465 (SEEDQMMRAIAMSLGQDIPM) constitute a UIM domain. The interval 1472-1491 (PEEVACRKEEEERKAREKQE) is disordered. The region spanning 1679–1756 (RAQMTKYLQS…ETGNRRPVML (78 aa)) is the WWE domain. Residues 1766-1802 (KNSKSSNGQELEKTLEESKETDIKRKENKGNDIPLAL) are disordered. Basic and acidic residues predominate over residues 1775–1795 (ELEKTLEESKETDIKRKENKG). The residue at position 1983 (Ser-1983) is a Phosphoserine. 3 disordered regions span residues 2095-2142 (APAE…SKPL), 2339-2420 (SLFG…QEMQ), and 2433-2556 (LERD…ASPL). A compositionally biased stretch (low complexity) spans 2097–2112 (AETSTTGTSQGEGAST). Thr-2112 carries the post-translational modification Phosphothreonine. Over residues 2114 to 2134 (EETREGKKDKEGDRTSEEGKQ) the composition is skewed to basic and acidic residues. Low complexity predominate over residues 2339–2368 (SLFGSKSASSKSKSEQDAQGASQDSSSHQQ). At Ser-2343 the chain carries Phosphoserine. Position 2344 is an N6-acetyllysine (Lys-2344). 2 stretches are compositionally biased toward acidic residues: residues 2372–2383 (EPGEAEVQEEDH) and 2391–2402 (ADGDIMDGEAET). Ser-2439, Ser-2442, and Ser-2468 each carry phosphoserine. Positions 2465 to 2475 (SNLSQASTLQA) are enriched in polar residues. Residues 2485–2549 (DPEDEEEHTQ…SEMELDEDYP (65 aa)) are compositionally biased toward acidic residues. 3 positions are modified to phosphoserine: Ser-2604, Ser-2609, and Ser-2612. A Phosphothreonine modification is found at Thr-2631. 3 positions are modified to phosphoserine: Ser-2661, Ser-2672, and Ser-2696. Residues 2781 to 2793 (IIDKGKEDKENRD) are compositionally biased toward basic and acidic residues. 2 disordered regions span residues 2781–3047 (IIDK…GVDP) and 3113–3136 (QQRAEQQRRELAQNASSDTPMDPV). Positions 2794–2813 (QSAQCTVSKTNDSTEQNVSD) are enriched in polar residues. The span at 2815 to 2849 (TPMPDSYPTTPSSTDAPTSESKETLGTLQPSQQQP) shows a compositional bias: low complexity. The residue at position 2828 (Thr-2828) is a Phosphothreonine. 3 stretches are compositionally biased toward polar residues: residues 2895-2912 (AETTQMELSPAPTITSLS), 2924-2941 (AVSSQLEGSPMDTSSLAS), and 2954-2967 (AGSSEQPTAGSSTP). A phosphoserine mark is found at Ser-2903, Ser-2910, Ser-2912, Ser-2938, Ser-2964, and Ser-2965. At Thr-2966 the chain carries Phosphothreonine. Residues 2990–3009 (PPEDSSPPASSESSSTRDSA) are compositionally biased toward low complexity. At Ser-2995 the chain carries Phosphoserine. Ser-3193, Ser-3194, Ser-3199, Ser-3204, and Ser-3212 each carry phosphoserine. Arg-3226 is subject to Omega-N-methylarginine. 5 disordered regions span residues 3320-3343 (PKLSTSEERGKKSSKSCASSSHEN), 3431-3458 (QRTKETNCESDRERGSKQACSPCSSQSS), 3482-3501 (GKNSVKSVPVSAGGEGETSL), 3548-3590 (SEVQ…TTPV), and 3615-3642 (TPTTATTTVSTSTTKGNKSPAKVGEGGS). Residues 3432–3446 (RTKETNCESDRERGS) are compositionally biased toward basic and acidic residues. A compositionally biased stretch (low complexity) spans 3447–3458 (KQACSPCSSQSS). Composition is skewed to low complexity over residues 3552-3579 (TNSSNSGSSTAATSNTSTTTTTTTATAP) and 3615-3628 (TPTTATTTVSTSTT). Residues Ser-3633, Ser-3740, Ser-3830, Ser-3835, Ser-3837, and Ser-3838 each carry the phosphoserine modification. Residues 3815–3836 (TRRANKKAKQTGRLGSSGLGSA) form a disordered region. Over residues 3826–3836 (GRLGSSGLGSA) the composition is skewed to low complexity. Disordered regions lie at residues 3859–3927 (EGQR…LPLL) and 3974–4028 (RESK…SSSL). Positions 3871–3880 (TSESSNQSET) are enriched in polar residues. Phosphoserine is present on residues Ser-3887, Ser-3895, and Ser-3907. The span at 3894 to 3905 (PSPSAQDTQSIV) shows a compositional bias: polar residues. At Thr-3910 the chain carries Phosphothreonine. Basic and acidic residues-rich tracts occupy residues 3913 to 3922 (GEKEKEERPP) and 3974 to 3995 (RESKPPVRDTRESQLAHIKDEP). Phosphoserine occurs at positions 3986 and 3999. Pro residues predominate over residues 3996–4005 (PPLSPAPLTP). Phosphothreonine is present on residues Thr-4004 and Thr-4007. Residues 4018–4028 (EPSSMHISSSL) are compositionally biased toward polar residues. The 337-residue stretch at 4118–4454 (SPEEMKNRLY…QECSEGFGLA (337 aa)) folds into the HECT domain. Tyr-4351 is subject to Phosphotyrosine. The Glycyl thioester intermediate role is filled by Cys-4421.

This sequence belongs to the UPL family. TOM1/PTR1 subfamily. In terms of assembly, interacts with isoform p14ARF of CDKN2A which strongly inhibits HUWE1 ubiquitin ligase activity. Interacts with MYCN, POLB and CDC6. Interacts with isoform 2 of PA2G4. Interacts with NR1D1. Interacts with AMBRA1. Interacts with HAPSTR1. Interacts with HAPSTR2. In hepatocytes, interacts with PAQR3; the interaction promotes PPARA poylubiquitination and STUB1-mediated degradation. Post-translationally, phosphorylated on tyrosine, phosphorylation is probably required for its ability to inhibit TP53 transactivation. In terms of tissue distribution, widely expressed.

It is found in the cytoplasm. Its subcellular location is the nucleus. The protein resides in the mitochondrion. It catalyses the reaction S-ubiquitinyl-[E2 ubiquitin-conjugating enzyme]-L-cysteine + [acceptor protein]-L-lysine = [E2 ubiquitin-conjugating enzyme]-L-cysteine + N(6)-ubiquitinyl-[acceptor protein]-L-lysine.. It participates in protein modification; protein ubiquitination. Its function is as follows. E3 ubiquitin-protein ligase which mediates ubiquitination and subsequent proteasomal degradation of target proteins. Regulates apoptosis by catalyzing the polyubiquitination and degradation of MCL1. Mediates monoubiquitination of DNA polymerase beta (POLB) at 'Lys-41', 'Lys-61' and 'Lys-81', thereby playing a role in base-excision repair. Also ubiquitinates the p53/TP53 tumor suppressor and core histones including H1, H2A, H2B, H3 and H4. Ubiquitinates MFN2 to negatively regulate mitochondrial fusion in response to decreased stearoylation of TFRC. Ubiquitination of MFN2 also takes place following induction of mitophagy; AMBRA1 acts as a cofactor for HUWE1-mediated ubiquitination. Regulates neural differentiation and proliferation by catalyzing the polyubiquitination and degradation of MYCN. May regulate abundance of CDC6 after DNA damage by polyubiquitinating and targeting CDC6 to degradation. Mediates polyubiquitination of PA2G4. Acts in concert with MYCBP2 to regulate the circadian clock gene expression by promoting the lithium-induced ubiquination and degradation of NR1D1. Binds to an upstream initiator-like sequence in the preprodynorphin gene. Mediates HAPSTR1 degradation, but is also a required cofactor in the pathway by which HAPSTR1 governs stress signaling. Acts as a regulator of the JNK and NF-kappa-B signaling pathways by mediating assembly of heterotypic 'Lys-63'-/'Lys-48'-linked branched ubiquitin chains that are then recognized by TAB2: HUWE1 mediates branching of 'Lys-48'-linked chains of substrates initially modified with 'Lys-63'-linked conjugates by TRAF6. 'Lys-63'-/'Lys-48'-linked branched ubiquitin chains protect 'Lys-63'-linkages from CYLD deubiquitination. Ubiquitinates PPARA in hepatocytes. The sequence is that of E3 ubiquitin-protein ligase HUWE1 (Huwe1) from Rattus norvegicus (Rat).